The following is a 430-amino-acid chain: Trigger factor (430 aa).

In terms of domain architecture, PPIase FKBP-type spans 163-248 (GNIAIIDFKG…IKDIKVKELP (86 aa)).

The protein belongs to the FKBP-type PPIase family. Tig subfamily.

The protein localises to the cytoplasm. It catalyses the reaction [protein]-peptidylproline (omega=180) = [protein]-peptidylproline (omega=0). Involved in protein export. Acts as a chaperone by maintaining the newly synthesized protein in an open conformation. Functions as a peptidyl-prolyl cis-trans isomerase. This Clostridium botulinum (strain ATCC 19397 / Type A) protein is Trigger factor.